Consider the following 321-residue polypeptide: uncharacterized protein (321 aa).

A signal peptide spans methionine 1–alanine 22.

It belongs to the bacterial solute-binding protein 1 family. WtpA subfamily.

This is an uncharacterized protein from Petrotoga mobilis (strain DSM 10674 / SJ95).